The sequence spans 182 residues: MSSICPTCTKRVYAAEAVKACEKQYHKLCLQCFHCHKILQLGQYSERDGQPYCKTDYDRLFRQAGYRGGGVVADSFEPAPKVETTTPVEPTPPPTFLTPTEEVKVQLFPTNCPKCGKKAYFNELKVYNSRDWHKTCFACFSCNKNLVSGQYSEKEGLIYCPRCYQSKFGPSGYTNTGALVLH.

LIM zinc-binding domains lie at 3–63 (SICP…LFRQ) and 110–170 (TNCP…KFGP).

It localises to the cell projection. It is found in the pseudopodium. Its subcellular location is the cytoplasm. The protein resides in the cell cortex. The protein localises to the cytoskeleton. Its function is as follows. Binds to F-actin and may modulate the chemotactic response during early development and contribute to the maintenance of the strength of the actin cytoskeleton. In Dictyostelium discoideum (Social amoeba), this protein is LIM domain-containing protein C (limC).